Here is a 280-residue protein sequence, read N- to C-terminus: Orotidine 5'-phosphate decarboxylase (280 aa).

The active-site Proton donor is Lys-96.

This sequence belongs to the OMP decarboxylase family. Type 2 subfamily.

The catalysed reaction is orotidine 5'-phosphate + H(+) = UMP + CO2. The protein operates within pyrimidine metabolism; UMP biosynthesis via de novo pathway; UMP from orotate: step 2/2. This is Orotidine 5'-phosphate decarboxylase from Parabacteroides distasonis (strain ATCC 8503 / DSM 20701 / CIP 104284 / JCM 5825 / NCTC 11152).